The primary structure comprises 330 residues: Mucin-15 (330 aa).

The signal sequence occupies residues Met1 to Gly23. Residues Gly23–Phe115 are disordered. Topologically, residues Glu24–Thr232 are extracellular. Residues Asn30, Asn44, Asn54, Asn71, Asn79, Asn89, Asn94, Asn122, Asn138, Asn147, Asn154, Asn162, Asn175, Asn214, and Asn221 are each glycosylated (N-linked (GlcNAc...) asparagine). A compositionally biased stretch (polar residues) spans Met42–Thr56. Positions Phe86–Phe115 are enriched in polar residues. The tract at residues Ser164–Glu185 is disordered. The helical transmembrane segment at Gly233–Gly253 threads the bilayer. Residues Tyr254–Val330 lie on the Cytoplasmic side of the membrane. A disordered region spans residues Leu279–Val330. Over residues Phe292–Gly310 the composition is skewed to polar residues.

Post-translationally, highly glycosylated (N- and O-linked carbohydrates). Mainly expressed on apical surfaces of the mammary epithelial cells.

Its subcellular location is the cell membrane. It localises to the secreted. The polypeptide is Mucin-15 (MUC15) (Bos taurus (Bovine)).